The sequence spans 248 residues: Proteasome subunit alpha type-3 (248 aa).

This sequence belongs to the peptidase T1A family. As to quaternary structure, the 26S proteasome consists of a 20S proteasome core and two 19S regulatory subunits. The 20S proteasome core is composed of 28 subunits that are arranged in four stacked rings, resulting in a barrel-shaped structure. The two end rings are each formed by seven alpha subunits, and the two central rings are each formed by seven beta subunits. The catalytic chamber with the active sites is on the inside of the barrel.

The protein localises to the cytoplasm. The protein resides in the nucleus. Its function is as follows. The proteasome is a multicatalytic proteinase complex which is characterized by its ability to cleave peptides with Arg, Phe, Tyr, Leu, and Glu adjacent to the leaving group at neutral or slightly basic pH. The proteasome has an ATP-dependent proteolytic activity. The protein is Proteasome subunit alpha type-3 (psmA3) of Dictyostelium discoideum (Social amoeba).